We begin with the raw amino-acid sequence, 452 residues long: Probable intron-encoded endonuclease 2 (452 aa).

Helical transmembrane passes span 1–21 (MNIT…NRKN), 22–42 (IILM…LILV), and 57–77 (IYII…LVAF). A ndh-4L exon 1 encoded region spans residues 1–80 (MNITLILFLI…LAILVAFYRL (80 aa)). The ndh-4L intron 1 encoded stretch occupies residues 81 to 452 (INSPVKNPRS…SLEGGMNKNI (372 aa)).

This sequence in the N-terminal section; belongs to the complex I subunit 4L family. In the C-terminal section; belongs to the LAGLIDADG endonuclease family.

It is found in the mitochondrion membrane. Mitochondrial DNA endonuclease involved in intron homing. In Neurospora crassa (strain ATCC 24698 / 74-OR23-1A / CBS 708.71 / DSM 1257 / FGSC 987), this protein is Probable intron-encoded endonuclease 2.